Consider the following 392-residue polypeptide: Major outer membrane protein P.IA (392 aa).

The first 19 residues, 1 to 19 (MRKKLTALVLSALPLAAVA), serve as a signal peptide directing secretion.

This sequence belongs to the Gram-negative porin family. As to quaternary structure, homotrimer.

Its subcellular location is the cell outer membrane. Functionally, serves as a slightly cation selective porin. Major antigen on the gonococcal cell surface and it may have pathogenic properties in addition to its porin activity. The protein is Major outer membrane protein P.IA (porA) of Neisseria meningitidis serogroup B (strain ATCC BAA-335 / MC58).